We begin with the raw amino-acid sequence, 203 residues long: Histidine biosynthesis bifunctional protein HisIE (203 aa).

Residues 1-114 (MLTEQQRREL…FGDTAHQWLF (114 aa)) form a phosphoribosyl-AMP cyclohydrolase region. The interval 115–203 (LYQLEQLLAE…VIENLRKRHQ (89 aa)) is phosphoribosyl-ATP pyrophosphohydrolase.

This sequence in the N-terminal section; belongs to the PRA-CH family. It in the C-terminal section; belongs to the PRA-PH family.

Its subcellular location is the cytoplasm. It carries out the reaction 1-(5-phospho-beta-D-ribosyl)-ATP + H2O = 1-(5-phospho-beta-D-ribosyl)-5'-AMP + diphosphate + H(+). The enzyme catalyses 1-(5-phospho-beta-D-ribosyl)-5'-AMP + H2O = 1-(5-phospho-beta-D-ribosyl)-5-[(5-phospho-beta-D-ribosylamino)methylideneamino]imidazole-4-carboxamide. It functions in the pathway amino-acid biosynthesis; L-histidine biosynthesis; L-histidine from 5-phospho-alpha-D-ribose 1-diphosphate: step 2/9. It participates in amino-acid biosynthesis; L-histidine biosynthesis; L-histidine from 5-phospho-alpha-D-ribose 1-diphosphate: step 3/9. This chain is Histidine biosynthesis bifunctional protein HisIE (hisI), found in Escherichia coli (strain K12).